The chain runs to 754 residues: Putative sulfate transporter YPR003C (754 aa).

Residues 1–91 (MTSNNSLLGR…NTSNTNNNDS (91 aa)) form a disordered region. Over 1–118 (MTSNNSLLGR…SWLPEYTFNK (118 aa)) the chain is Cytoplasmic. The segment covering 25-45 (RSVDQRDTFSDNFDYDKDSSN) has biased composition (basic and acidic residues). The span at 65–89 (NSRSGCTNNTNNTNNTSNTSNTNNN) shows a compositional bias: low complexity. The helical transmembrane segment at 119 to 139 (LWGDVIAGISVASFQIPLALS) threads the bilayer. Residues 140 to 146 (YTTSIAH) are Lumenal-facing. Residues 147-167 (VPPLCGLYSLAISPFVYGILG) traverse the membrane as a helical segment. The Cytoplasmic portion of the chain corresponds to 168-172 (SVPQM). A helical membrane pass occupies residues 173–193 (IVGPESAISLVVGQAVESITL). The Lumenal segment spans residues 194 to 199 (HKENVS). A helical transmembrane segment spans residues 200 to 220 (LIDISTVITFVSGTILLFSGI). Residues 221–232 (SRFGFLGNVLSK) lie on the Cytoplasmic side of the membrane. A helical transmembrane segment spans residues 233-253 (ALLRGFISSVGLVMIINSLIS). The Lumenal portion of the chain corresponds to 254 to 282 (ELKLDKFLVSLPQHYHTPFEKILFLIDYA). A helical membrane pass occupies residues 283–303 (PAQYHIPTAIFSGCCLIVLFL). Residues 304–317 (TRLLKRKLMKYHKS) lie on the Cytoplasmic side of the membrane. The chain crosses the membrane as a helical span at residues 318 to 338 (AIFFPDILLVVIVTILISMKF). Topologically, residues 339–370 (NLKHRYGISIIGDFSMDNFDELKNPLTRPRRK) are lumenal. A helical membrane pass occupies residues 371–391 (LIPDLFSASLIVAMLGFFEST). The Cytoplasmic portion of the chain corresponds to 392–410 (TASKSLGTTYNLTVSSNRE). The chain crosses the membrane as a helical span at residues 411–431 (LVALGFMNIVISLFGALPAFG). At 432 to 450 (GYGRSKINALSGAQSVMSG) the chain is on the lumenal side. The helical transmembrane segment at 451–471 (VFMGVITLITMNLLLQFVHYI) threads the bilayer. Residues 472-474 (PNC) are Cytoplasmic-facing. Residues 475 to 495 (VLSVITTIIGISLLEEVPGDI) form a helical membrane-spanning segment. The Lumenal segment spans residues 496 to 517 (KFHLRCGGFSELFVFAVTFCTT). A helical membrane pass occupies residues 518–538 (IFYSIEAGICIGCVYSIINII). Over 539 to 754 (KHSAKSRIQI…SNTLFNSSLV (216 aa)) the chain is Cytoplasmic. The STAS domain maps to 574-725 (DVEGTEEIEG…DSIDAALYEI (152 aa)).

This sequence belongs to the SLC26A/SulP transporter (TC 2.A.53) family.

It is found in the endoplasmic reticulum membrane. In terms of biological role, possible sulfate transporter. The protein is Putative sulfate transporter YPR003C of Saccharomyces cerevisiae (strain ATCC 204508 / S288c) (Baker's yeast).